Reading from the N-terminus, the 238-residue chain is 1-(5-phosphoribosyl)-5-[(5-phosphoribosylamino)methylideneamino] imidazole-4-carboxamide isomerase (238 aa).

Residue D8 is the Proton acceptor of the active site. The Proton donor role is filled by D129.

This sequence belongs to the HisA/HisF family.

It localises to the cytoplasm. The catalysed reaction is 1-(5-phospho-beta-D-ribosyl)-5-[(5-phospho-beta-D-ribosylamino)methylideneamino]imidazole-4-carboxamide = 5-[(5-phospho-1-deoxy-D-ribulos-1-ylimino)methylamino]-1-(5-phospho-beta-D-ribosyl)imidazole-4-carboxamide. It functions in the pathway amino-acid biosynthesis; L-histidine biosynthesis; L-histidine from 5-phospho-alpha-D-ribose 1-diphosphate: step 4/9. This Clostridium kluyveri (strain NBRC 12016) protein is 1-(5-phosphoribosyl)-5-[(5-phosphoribosylamino)methylideneamino] imidazole-4-carboxamide isomerase.